The following is a 180-amino-acid chain: Large ribosomal subunit protein uL10 (180 aa).

Belongs to the universal ribosomal protein uL10 family. Part of the ribosomal stalk of the 50S ribosomal subunit. The N-terminus interacts with L11 and the large rRNA to form the base of the stalk. The C-terminus forms an elongated spine to which L12 dimers bind in a sequential fashion forming a multimeric L10(L12)X complex.

Forms part of the ribosomal stalk, playing a central role in the interaction of the ribosome with GTP-bound translation factors. The sequence is that of Large ribosomal subunit protein uL10 from Thermosipho africanus (strain TCF52B).